Reading from the N-terminus, the 74-residue chain is ATP synthase subunit c (74 aa).

The next 2 helical transmembrane spans lie at 8–28 and 52–72; these read FIGI…VSNI and IGAG…MLLI.

This sequence belongs to the ATPase C chain family. As to quaternary structure, F-type ATPases have 2 components, F(1) - the catalytic core - and F(0) - the membrane proton channel. F(1) has five subunits: alpha(3), beta(3), gamma(1), delta(1), epsilon(1). F(0) has three main subunits: a(1), b(2) and c(10-14). The alpha and beta chains form an alternating ring which encloses part of the gamma chain. F(1) is attached to F(0) by a central stalk formed by the gamma and epsilon chains, while a peripheral stalk is formed by the delta and b chains.

It localises to the cell inner membrane. Functionally, f(1)F(0) ATP synthase produces ATP from ADP in the presence of a proton or sodium gradient. F-type ATPases consist of two structural domains, F(1) containing the extramembraneous catalytic core and F(0) containing the membrane proton channel, linked together by a central stalk and a peripheral stalk. During catalysis, ATP synthesis in the catalytic domain of F(1) is coupled via a rotary mechanism of the central stalk subunits to proton translocation. Its function is as follows. Key component of the F(0) channel; it plays a direct role in translocation across the membrane. A homomeric c-ring of between 10-14 subunits forms the central stalk rotor element with the F(1) delta and epsilon subunits. The sequence is that of ATP synthase subunit c from Rickettsia prowazekii (strain Madrid E).